A 110-amino-acid polypeptide reads, in one-letter code: Large ribosomal subunit protein uL22 (110 aa).

The protein belongs to the universal ribosomal protein uL22 family. Part of the 50S ribosomal subunit.

In terms of biological role, this protein binds specifically to 23S rRNA; its binding is stimulated by other ribosomal proteins, e.g. L4, L17, and L20. It is important during the early stages of 50S assembly. It makes multiple contacts with different domains of the 23S rRNA in the assembled 50S subunit and ribosome. Functionally, the globular domain of the protein is located near the polypeptide exit tunnel on the outside of the subunit, while an extended beta-hairpin is found that lines the wall of the exit tunnel in the center of the 70S ribosome. This is Large ribosomal subunit protein uL22 from Enterobacter sp. (strain 638).